A 257-amino-acid chain; its full sequence is Hydroxyethylthiazole kinase (257 aa).

M49 contacts substrate. ATP is bound by residues R124 and T170. G197 provides a ligand contact to substrate.

This sequence belongs to the Thz kinase family. Mg(2+) serves as cofactor.

The catalysed reaction is 5-(2-hydroxyethyl)-4-methylthiazole + ATP = 4-methyl-5-(2-phosphooxyethyl)-thiazole + ADP + H(+). Its pathway is cofactor biosynthesis; thiamine diphosphate biosynthesis; 4-methyl-5-(2-phosphoethyl)-thiazole from 5-(2-hydroxyethyl)-4-methylthiazole: step 1/1. Its function is as follows. Catalyzes the phosphorylation of the hydroxyl group of 4-methyl-5-beta-hydroxyethylthiazole (THZ). This Klebsiella pneumoniae (strain 342) protein is Hydroxyethylthiazole kinase.